Here is a 412-residue protein sequence, read N- to C-terminus: Putative oxidoreductase bli-4, mitochondrial (412 aa).

Residues 1 to 55 constitute a mitochondrion transit peptide; it reads MSTKLCQRIARTATLSPTSLVPRSSRLIPIVSSAAVRPSSAIPTRRPFSTTESRY. The NADP(+) site is built by Ile108, Asn120, Asn186, Tyr269, Lys273, Val308, Thr310, and Gln312. Tyr269 functions as the Proton donor in the catalytic mechanism. Catalysis depends on Lys273, which acts as the Lowers pKa of active site Tyr.

The protein belongs to the short-chain dehydrogenases/reductases (SDR) family.

It localises to the mitochondrion. May play a role as an NAD-dependent dehydrogenase in the mitochondria. The chain is Putative oxidoreductase bli-4, mitochondrial (bli-4) from Neurospora crassa (strain ATCC 24698 / 74-OR23-1A / CBS 708.71 / DSM 1257 / FGSC 987).